Consider the following 117-residue polypeptide: Hainantoxin-XV.2 (117 aa).

An N-terminal signal peptide occupies residues 1 to 20 (MKLCAVIIASLLVCAAVASS). Positions 18–55 (ASSSDNQKEFAQEKEMTREETQSLGEHEKDDEVTGSEE) are disordered. The propeptide occupies 21–56 (SDNQKEFAQEKEMTREETQSLGEHEKDDEVTGSEER). The segment covering 23-55 (NQKEFAQEKEMTREETQSLGEHEKDDEVTGSEE) has biased composition (basic and acidic residues). 4 disulfides stabilise this stretch: cysteine 58/cysteine 72, cysteine 65/cysteine 78, cysteine 69/cysteine 115, and cysteine 71/cysteine 91.

Belongs to the neurotoxin 03 (Tx2) family. 02 subfamily. HNTX-XV sub-subfamily. As to expression, expressed by the venom gland.

Its subcellular location is the secreted. Functionally, putative ion channel inhibitor. This is Hainantoxin-XV.2 from Cyriopagopus hainanus (Chinese bird spider).